The sequence spans 168 residues: Cyclin-dependent kinase 4 inhibitor C (168 aa).

ANK repeat units lie at residues 4-33 (PWGN…NVNA), 37-65 (FGRT…NPNL), 69-98 (TGFA…DVNI), 102-132 (EGNL…NVGH), and 136-165 (KGDT…GGAT).

This sequence belongs to the CDKN2 cyclin-dependent kinase inhibitor family. Heterodimer of p18 with CDK6.

Its function is as follows. Interacts strongly with CDK6, weakly with CDK4. Inhibits cell growth and proliferation with a correlated dependence on endogenous retinoblastoma protein RB. The sequence is that of Cyclin-dependent kinase 4 inhibitor C (Cdkn2c) from Mus musculus (Mouse).